A 231-amino-acid chain; its full sequence is Uridylate kinase (231 aa).

Position 6–9 (6–9 (KLSG)) interacts with ATP. The interval 14–19 (GEGGRG) is involved in allosteric activation by GTP. The ATP site is built by Gly49 and Arg53. UMP contacts are provided by residues Asp66 and 127 to 134 (TSNPFFTT). ATP contacts are provided by Thr154, Tyr160, and Asp163.

It belongs to the UMP kinase family. Homohexamer.

The protein resides in the cytoplasm. It catalyses the reaction UMP + ATP = UDP + ADP. It participates in pyrimidine metabolism; CTP biosynthesis via de novo pathway; UDP from UMP (UMPK route): step 1/1. Its activity is regulated as follows. Allosterically activated by GTP. Inhibited by UTP. Its function is as follows. Catalyzes the reversible phosphorylation of UMP to UDP. The sequence is that of Uridylate kinase from Thermotoga petrophila (strain ATCC BAA-488 / DSM 13995 / JCM 10881 / RKU-1).